The sequence spans 81 residues: Large ribosomal subunit protein bL31B (81 aa).

It belongs to the bacterial ribosomal protein bL31 family. Type B subfamily. In terms of assembly, part of the 50S ribosomal subunit.

This Lactobacillus acidophilus (strain ATCC 700396 / NCK56 / N2 / NCFM) protein is Large ribosomal subunit protein bL31B.